The sequence spans 319 residues: Very-long-chain 3-oxoacyl-CoA reductase-A (319 aa).

The helical transmembrane segment at 17-37 (LFWVGALITASLALYVVYKTI) threads the bilayer. 56-85 (GKWAVVTGATDGIGKSYAEELARRGFSMML) serves as a coordination point for NADP(+). The next 2 membrane-spanning stretches (helical) occupy residues 188-208 (GVIL…LTIY) and 282-302 (AVMG…NLGL). Ser195 contacts substrate. Catalysis depends on Tyr208, which acts as the Proton acceptor.

Belongs to the short-chain dehydrogenases/reductases (SDR) family. 17-beta-HSD 3 subfamily.

It is found in the endoplasmic reticulum membrane. The catalysed reaction is a very-long-chain (3R)-3-hydroxyacyl-CoA + NADP(+) = a very-long-chain 3-oxoacyl-CoA + NADPH + H(+). It carries out the reaction 17beta-estradiol + NAD(+) = estrone + NADH + H(+). It catalyses the reaction 17beta-estradiol + NADP(+) = estrone + NADPH + H(+). It participates in lipid metabolism; fatty acid biosynthesis. Its pathway is steroid biosynthesis; estrogen biosynthesis. Catalyzes the second of the four reactions of the long-chain fatty acids elongation cycle. This endoplasmic reticulum-bound enzymatic process, allows the addition of two carbons to the chain of long- and very long-chain fatty acids/VLCFAs per cycle. This enzyme has a 3-ketoacyl-CoA reductase activity, reducing 3-ketoacyl-CoA to 3-hydroxyacyl-CoA, within each cycle of fatty acid elongation. Thereby, it may participate in the production of VLCFAs of different chain lengths that are involved in multiple biological processes as precursors of membrane lipids and lipid mediators. May also catalyze the transformation of estrone (E1) into estradiol (E2) and play a role in estrogen formation. This chain is Very-long-chain 3-oxoacyl-CoA reductase-A (hsd17b12a), found in Danio rerio (Zebrafish).